The primary structure comprises 383 residues: 1-deoxy-D-xylulose 5-phosphate reductoisomerase (383 aa).

Positions 10, 11, 12, 13, 36, 37, 38, and 122 each coordinate NADPH. 1-deoxy-D-xylulose 5-phosphate is bound at residue Lys123. Position 124 (Glu124) interacts with NADPH. Asp148 lines the Mn(2+) pocket. 1-deoxy-D-xylulose 5-phosphate is bound by residues Ser149, Glu150, Ser174, and His197. Glu150 is a Mn(2+) binding site. Position 203 (Gly203) interacts with NADPH. Ser210, Asn215, Lys216, and Glu219 together coordinate 1-deoxy-D-xylulose 5-phosphate. Glu219 serves as a coordination point for Mn(2+).

The protein belongs to the DXR family. It depends on Mg(2+) as a cofactor. The cofactor is Mn(2+).

It catalyses the reaction 2-C-methyl-D-erythritol 4-phosphate + NADP(+) = 1-deoxy-D-xylulose 5-phosphate + NADPH + H(+). It participates in isoprenoid biosynthesis; isopentenyl diphosphate biosynthesis via DXP pathway; isopentenyl diphosphate from 1-deoxy-D-xylulose 5-phosphate: step 1/6. Its function is as follows. Catalyzes the NADPH-dependent rearrangement and reduction of 1-deoxy-D-xylulose-5-phosphate (DXP) to 2-C-methyl-D-erythritol 4-phosphate (MEP). This Bacillus subtilis (strain 168) protein is 1-deoxy-D-xylulose 5-phosphate reductoisomerase.